We begin with the raw amino-acid sequence, 2442 residues long: Piezo-type mechanosensitive ion channel component 1 (2442 aa).

The Extracellular segment spans residues 1-5 (MTVPP). The helical transmembrane segment at 6-26 (LLKSCVVKLLLPAALLAAAII) threads the bilayer. Arginine 27 is a topological domain (cytoplasmic). Residues 28–48 (PSFLSIGYVLLALVSAVLPPI) form a helical membrane-spanning segment. At 49–56 (RKSLALPK) the chain is on the extracellular side. A helical transmembrane segment spans residues 57–77 (LVGTFVIITFLFCLAVALGVG). At 78 to 122 (SYQISEQVVHKNDRTYICNRSDTTLFRSIGLVRFHPTGTFESTRA) the chain is on the cytoplasmic side. Residues 123–143 (FLPEIIATSAALLTIIIVMFL) form a helical membrane-spanning segment. Over 144–173 (SHRDEQLDVVGDVVTVRSESGREQRRQRKL) the chain is Extracellular. Residues 174–196 (AAIMWSAIGNSLRRLTNFVLFLF) form a helical membrane-spanning segment. The Cytoplasmic segment spans residues 197–198 (TA). Residues 199 to 219 (YVGIVKPSLSNSIYFLAFLFI) traverse the membrane as a helical segment. Topologically, residues 220 to 239 (STWWSTYTPLRHGVYNQIKK) are extracellular. Residues 240-260 (FLIFYSALHFLVLYTYQIPIV) form a helical membrane-spanning segment. Over 261–303 (HHSWLPTGSFLPRLFGLTVLMDSSCPEWWKFPFVAPDFNDDDL) the chain is Cytoplasmic. Residues 304–324 (IMKWPLYANPIVVLVFFYLTV) traverse the membrane as a helical segment. The Extracellular portion of the chain corresponds to 325-454 (AQYKFTRNGS…GDKESAASKG (130 aa)). 3 N-linked (GlcNAc...) asparagine glycosylation sites follow: asparagine 332, asparagine 392, and asparagine 440. The segment at 389 to 417 (LLSNASSSANDDEQGRARSRSPLRNGEEQ) is disordered. The chain crosses the membrane as a helical span at residues 455-475 (MIAVMTFVIFHSYSIALTAMM). At 476 to 478 (TWA) the chain is on the cytoplasmic side. The chain crosses the membrane as a helical span at residues 479-499 (LLYHSIFGLILLILTCILWIF). At 500–506 (RDTRKSS) the chain is on the extracellular side. A helical membrane pass occupies residues 507 to 527 (FAMAPIILMYIEFLLILQYFL). Residues 528-552 (SMDIHAEIGDPAWMNFVGIEWTTLP) lie on the Cytoplasmic side of the membrane. A helical membrane pass occupies residues 553-573 (VHAVIILCVQTLLTLPVFLLL). Topologically, residues 574–633 (RLARREKFYESLSDYERQRRINSYGTFGASKTGAGGVAVAKFQDPKSRKFAAFVEYLSNK) are extracellular. Residues 634-654 (VSVYFIFVVSVVLLVVSTCFA) form a helical membrane-spanning segment. Residues 655-656 (PN) are Cytoplasmic-facing. The chain crosses the membrane as a helical span at residues 657 to 677 (FYNILFFALWALNLIYLKFSF). Residues 678 to 683 (RLYRGL) lie on the Extracellular side of the membrane. A helical transmembrane segment spans residues 684–704 (AYAFWLTLTFYTSIVIIALYI). At 705–739 (YQFPGVSQWIIRNTSLSQEWLNAIGLVDFRAIGES) the chain is on the cytoplasmic side. The chain crosses the membrane as a helical span at residues 740-760 (GALFLQLLAPIALFVVTMLQL). The Extracellular segment spans residues 761 to 832 (KFFHGPWSRA…WRFFEVHISK (72 aa)). A disordered region spans residues 768 to 798 (SRATSPRRAENDPPTSTTEAAAVASTSGTQG). Over residues 782-794 (TSTTEAAAVASTS) the composition is skewed to low complexity. Asparagine 816 is a glycosylation site (N-linked (GlcNAc...) asparagine). The helical transmembrane segment at 833–853 (IVFVIIAIFIANNINALYIPL) threads the bilayer. Residues 854–874 (VILLSLAICLPSAADGIFSLF) are Cytoplasmic-facing. Residues 875-895 (MCAYLFLVALSKMIYQLDIVP) form a helical membrane-spanning segment. Residues 896–931 (ELSQIDRGVGADNCSHGNISMPEWFGLKKEVEGTEP) are Extracellular-facing. Residues asparagine 908 and asparagine 913 are each glycosylated (N-linked (GlcNAc...) asparagine). Residues 932 to 952 (IYMLFGVIVSIIALAFQSIVI) form a helical membrane-spanning segment. The Cytoplasmic portion of the chain corresponds to 953 to 990 (YRQRHYRASLGLPESMRAKVFPDFHHSHFDRSLKNAIQ). A helical membrane pass occupies residues 991-1011 (FLIDYGFYKFGLEITMIAIGI). Aspartate 1012 is a topological domain (extracellular). A helical membrane pass occupies residues 1013 to 1033 (IFNRMDALAAIQCFWLVLFAL). Topologically, residues 1034 to 1041 (NKRVFVRR) are cytoplasmic. A helical membrane pass occupies residues 1042–1062 (IWVFYVIYMAILYPLQFFSYV). Topologically, residues 1063 to 1096 (GLPPDSCIEYPWSYWIPSYSDDARFNLSYLLNLS) are extracellular. 2 N-linked (GlcNAc...) asparagine glycosylation sites follow: asparagine 1088 and asparagine 1094. A helical transmembrane segment spans residues 1097–1117 (IYGVNWPSAYLIGDFFVLLLA). At 1118–1160 (SCQLAVFRREGEDNDSIYNDGNFVIKPENPQYDFIDTKKSYVD) the chain is on the cytoplasmic side. The chain crosses the membrane as a helical span at residues 1161–1181 (YFKSFVFHYGHWITLMSTLAA). Over 1182-1187 (GIAGTS) the chain is Extracellular. A helical membrane pass occupies residues 1188–1210 (LFALGYIIFTLTMLWSGNNLYVM). Topologically, residues 1211–1231 (NSTLRSFEHTLKRWNALLGYT) are cytoplasmic. A helical transmembrane segment spans residues 1232 to 1252 (LFTITMKVCLQIFGCVFLSWF). Topologically, residues 1253–1299 (DQSGGWGKTLCIVRQLFSITCVNNECHVLKELEDFSKACAVETKEGN) are extracellular. Residues 1300 to 1320 (IGFDVIALSFLVFQIRIFHSW) form a helical membrane-spanning segment. Topologically, residues 1321–1615 (YFQHCMVEYR…VVNCIGAHTD (295 aa)) are cytoplasmic. Positions 1463–1502 (DTIKDPDSRALIAVSEPEARKPGGTEETDGDEDEDNKDSK) are disordered. Residues 1488–1498 (EETDGDEDEDN) are compositionally biased toward acidic residues. Residues 1616–1636 (ILCYFFAIMTQVMTGGLITLP) traverse the membrane as a helical segment. Over 1637–1654 (LPLMSLFWGNLSNPRPSK) the chain is Extracellular. Asparagine 1646 is a glycosylation site (N-linked (GlcNAc...) asparagine). Residues 1655 to 1675 (FFWVTMITYTECVIVIKFVCQ) traverse the membrane as a helical segment. Topologically, residues 1676-1706 (FAFMPYNSITWRTEHQMDPMSLDKLFGVSQR) are cytoplasmic. A helical transmembrane segment spans residues 1707–1727 (DSFALWDIVLLFSLFFHRYML). Residues 1728–1833 (RKLGLWKDAN…KFRYIRDLYP (106 aa)) are Extracellular-facing. An N-linked (GlcNAc...) asparagine glycan is attached at asparagine 1737. A helical membrane pass occupies residues 1834 to 1854 (IMFGIDVICFLIMTFGYSAFG). Residues 1855 to 1866 (EGGSGNVLDDVK) lie on the Cytoplasmic side of the membrane. Residues 1867-1887 (ASRIPVTLVVMLVGMTLAIII) traverse the membrane as a helical segment. Over 1888-1900 (DRALYLRKSVVGK) the chain is Extracellular. Residues 1901–1921 (LIYQVLMIAFLHIWVFLVLPN) form a helical membrane-spanning segment. Over 1922–1930 (MTRRSAISN) the chain is Cytoplasmic. The helical transmembrane segment at 1931–1951 (HVAQALYVIKSCYFLVSAWQI) threads the bilayer. Residues 1952-2046 (RNGYPELCIG…KGKLVKYMMG (95 aa)) lie on the Extracellular side of the membrane. A helical transmembrane segment spans residues 2047–2067 (FPIIIGVVIFIFSPLLLWSLL). Residues 2068-2346 (NQIGTISMPE…VGFIDRAFPS (279 aa)) lie on the Cytoplasmic side of the membrane. Residues 2347-2367 (FLAKVFKGGVIAVYLSVILVV) traverse the membrane as a helical segment. Over 2368-2442 (GRGLVRGIFT…WTRMSKKKQE (75 aa)) the chain is Extracellular.

It belongs to the PIEZO (TC 1.A.75) family. Expressed in the pharyngeal-intestinal and spermathecal-uterine valves and in multiple reproductive tissues including the germline, somatic oviduct, and spermatheca. During reproduction, it is expressed in sheath cells, sperm, both spermathecal valves and the spermathecal bag cells.

It localises to the cell membrane. Functionally, pore-forming subunit of a mechanosensitive non-specific cation channel. Generates currents characterized by a linear current-voltage relationship. Plays a role in reproduction by positively regulating inter-tissue signaling to promote oocyte maturation, ovulation and fertilization, and sperm navigation from and to the spermatheca. May play a role in regulating cytosolic and endoplasmic reticulum calcium ion release. The chain is Piezo-type mechanosensitive ion channel component 1 from Caenorhabditis elegans.